Reading from the N-terminus, the 132-residue chain is Small ribosomal subunit protein uS8 (132 aa).

It belongs to the universal ribosomal protein uS8 family. As to quaternary structure, part of the 30S ribosomal subunit. Contacts proteins S5 and S12.

Functionally, one of the primary rRNA binding proteins, it binds directly to 16S rRNA central domain where it helps coordinate assembly of the platform of the 30S subunit. The chain is Small ribosomal subunit protein uS8 from Geobacter sulfurreducens (strain ATCC 51573 / DSM 12127 / PCA).